Reading from the N-terminus, the 407-residue chain is Elongation factor Tu (407 aa).

Positions Lys-10–Glu-217 constitute a tr-type G domain. A G1 region spans residues Gly-19–Thr-26. Gly-19–Thr-26 provides a ligand contact to GTP. Residue Thr-26 coordinates Mg(2+). Positions Gly-60 to Ser-64 are G2. A G3 region spans residues Asp-81–Gly-84. Residues Asp-81–His-85 and Asn-136–Asp-139 contribute to the GTP site. The tract at residues Asn-136–Asp-139 is G4. Positions Ser-184–Leu-186 are G5.

Belongs to the TRAFAC class translation factor GTPase superfamily. Classic translation factor GTPase family. EF-Tu/EF-1A subfamily. Monomer.

Its subcellular location is the cytoplasm. The enzyme catalyses GTP + H2O = GDP + phosphate + H(+). GTP hydrolase that promotes the GTP-dependent binding of aminoacyl-tRNA to the A-site of ribosomes during protein biosynthesis. The sequence is that of Elongation factor Tu from Marinomonas sp. (strain MWYL1).